Consider the following 578-residue polypeptide: Arginine--tRNA ligase (578 aa).

The 'HIGH' region motif lies at 127-137; that stretch reads PNLAKEMHVGH.

Belongs to the class-I aminoacyl-tRNA synthetase family. As to quaternary structure, monomer.

The protein localises to the cytoplasm. It catalyses the reaction tRNA(Arg) + L-arginine + ATP = L-arginyl-tRNA(Arg) + AMP + diphosphate. This is Arginine--tRNA ligase from Pseudomonas entomophila (strain L48).